The sequence spans 150 residues: SsrA-binding protein (150 aa).

It belongs to the SmpB family.

The protein localises to the cytoplasm. Functionally, required for rescue of stalled ribosomes mediated by trans-translation. Binds to transfer-messenger RNA (tmRNA), required for stable association of tmRNA with ribosomes. tmRNA and SmpB together mimic tRNA shape, replacing the anticodon stem-loop with SmpB. tmRNA is encoded by the ssrA gene; the 2 termini fold to resemble tRNA(Ala) and it encodes a 'tag peptide', a short internal open reading frame. During trans-translation Ala-aminoacylated tmRNA acts like a tRNA, entering the A-site of stalled ribosomes, displacing the stalled mRNA. The ribosome then switches to translate the ORF on the tmRNA; the nascent peptide is terminated with the 'tag peptide' encoded by the tmRNA and targeted for degradation. The ribosome is freed to recommence translation, which seems to be the essential function of trans-translation. This is SsrA-binding protein from Rubrobacter xylanophilus (strain DSM 9941 / JCM 11954 / NBRC 16129 / PRD-1).